The following is a 440-amino-acid chain: RNA polymerase II C-terminal domain phosphatase-like 4 (440 aa).

The segment covering 1–36 (MSVASDSPVHSSSSSDDLAAFLDAELDSASDASSGP) has biased composition (low complexity). The interval 1–49 (MSVASDSPVHSSSSSDDLAAFLDAELDSASDASSGPSEEEEAEDDVESG) is disordered. A compositionally biased stretch (acidic residues) spans 37 to 47 (SEEEEAEDDVE). The FCP1 homology domain occupies 118 to 292 (QRQRKLYLVL…DHRYKSLSEL (175 aa)). Positions 337–429 (VRKEILKGCK…MKQPEENFGL (93 aa)) constitute a BRCT domain.

In terms of assembly, interacts with RAP74. The cofactor is Mg(2+). Co(2+) is required as a cofactor. It depends on Mn(2+) as a cofactor.

It localises to the nucleus. The catalysed reaction is O-phospho-L-seryl-[protein] + H2O = L-seryl-[protein] + phosphate. The enzyme catalyses O-phospho-L-threonyl-[protein] + H2O = L-threonyl-[protein] + phosphate. Functionally, processively dephosphorylates 'Ser-2' and/or 'Ser-5' of the heptad repeats YSPTSPS in the C-terminal domain of the largest RNA polymerase II subunit (RPB1). This promotes the activity of RNA polymerase II. Required for normal plant growth. This is RNA polymerase II C-terminal domain phosphatase-like 4 (CPL4) from Arabidopsis thaliana (Mouse-ear cress).